The chain runs to 317 residues: Aspartate carbamoyltransferase catalytic subunit (317 aa).

Residues Arg66 and Thr67 each coordinate carbamoyl phosphate. Lys94 provides a ligand contact to L-aspartate. Positions 116, 144, and 147 each coordinate carbamoyl phosphate. Residues Arg177 and Arg231 each contribute to the L-aspartate site. Carbamoyl phosphate-binding residues include Gly272 and Pro273.

The protein belongs to the aspartate/ornithine carbamoyltransferase superfamily. ATCase family. As to quaternary structure, heterododecamer (2C3:3R2) of six catalytic PyrB chains organized as two trimers (C3), and six regulatory PyrI chains organized as three dimers (R2).

It carries out the reaction carbamoyl phosphate + L-aspartate = N-carbamoyl-L-aspartate + phosphate + H(+). Its pathway is pyrimidine metabolism; UMP biosynthesis via de novo pathway; (S)-dihydroorotate from bicarbonate: step 2/3. Its function is as follows. Catalyzes the condensation of carbamoyl phosphate and aspartate to form carbamoyl aspartate and inorganic phosphate, the committed step in the de novo pyrimidine nucleotide biosynthesis pathway. The polypeptide is Aspartate carbamoyltransferase catalytic subunit (Nitrobacter hamburgensis (strain DSM 10229 / NCIMB 13809 / X14)).